We begin with the raw amino-acid sequence, 995 residues long: S1 RNA-binding domain-containing protein 1 (995 aa).

A disordered region spans residues 23–81 (SFSELSSASEEDDKEDSAWEPQKKVPRSRKQPPPKESKPKRMPRVKKNAPQISDGSEVV). Glycyl lysine isopeptide (Lys-Gly) (interchain with G-Cter in SUMO2) cross-links involve residues Lys-84 and Lys-134. Positions 120–165 (CAAQPHTVRRTKKLKVEEETSKASNLEGESNSSETPSTSTVWGGTC) are disordered. Low complexity predominate over residues 146–159 (EGESNSSETPSTST). Residues Lys-166, Lys-167, and Lys-183 each participate in a glycyl lysine isopeptide (Lys-Gly) (interchain with G-Cter in SUMO2) cross-link. Residue Lys-185 forms a Glycyl lysine isopeptide (Lys-Gly) (interchain with G-Cter in SUMO1); alternate linkage. Lys-185 participates in a covalent cross-link: Glycyl lysine isopeptide (Lys-Gly) (interchain with G-Cter in SUMO2); alternate. Residues 258 to 288 (ADSLREVQQTLEELRAVAKKVHSTIQKIKKE) adopt a coiled-coil conformation. The residue at position 861 (Ser-861) is a Phosphoserine. Residues 919–992 (GTVLTGKVEN…PRSRITLDLI (74 aa)) form the S1 motif domain. Lys-955 is covalently cross-linked (Glycyl lysine isopeptide (Lys-Gly) (interchain with G-Cter in SUMO2)). Residue Ser-964 is modified to Phosphoserine.

This is S1 RNA-binding domain-containing protein 1 (SRBD1) from Homo sapiens (Human).